A 357-amino-acid polypeptide reads, in one-letter code: Peptide chain release factor 1 (357 aa).

N5-methylglutamine is present on Q236. Positions 284-293 are enriched in basic and acidic residues; it reads RRKKDQERAN. The disordered stretch occupies residues 284-313; it reads RRKKDQERANNRRKQIGSGDRSERIRTYNF.

This sequence belongs to the prokaryotic/mitochondrial release factor family. Methylated by PrmC. Methylation increases the termination efficiency of RF1.

It is found in the cytoplasm. Functionally, peptide chain release factor 1 directs the termination of translation in response to the peptide chain termination codons UAG and UAA. This is Peptide chain release factor 1 from Rickettsia bellii (strain RML369-C).